We begin with the raw amino-acid sequence, 466 residues long: Dihydrolipoyl dehydrogenase 3 (466 aa).

FAD is bound by residues 33–42 (EGRSTLGGTC), Lys-51, and Gly-115. A disulfide bond links Cys-42 and Cys-47. NAD(+) contacts are provided by residues 181–185 (GAGVI), Glu-204, Val-238, and 271–274 (AIGR). Asp-313 and Ala-321 together coordinate FAD. His-445 serves as the catalytic Proton acceptor.

Belongs to the class-I pyridine nucleotide-disulfide oxidoreductase family. In terms of assembly, homodimer. The cofactor is FAD.

Its subcellular location is the cytoplasm. It carries out the reaction N(6)-[(R)-dihydrolipoyl]-L-lysyl-[protein] + NAD(+) = N(6)-[(R)-lipoyl]-L-lysyl-[protein] + NADH + H(+). LPD-3 may substitute for lipoamide dehydrogenase of the 2-oxoglutarate dehydrogenase and pyruvate multienzyme complexes when the latter is inactive or missing. This Pseudomonas putida (Arthrobacter siderocapsulatus) protein is Dihydrolipoyl dehydrogenase 3 (lpd3).